We begin with the raw amino-acid sequence, 108 residues long: Cytochrome c oxidase subunit 1 (108 aa).

A helical membrane pass occupies residues 10 to 30 (AFVAPVLGLLGFIPGGAGGIV). Histidine 49 is a heme a3 binding site. The next 2 helical transmembrane spans lie at 50-70 (FHLQ…YWLL) and 85-105 (LGLA…VGLH). Fe(II)-heme a is bound at residue histidine 51.

Belongs to the heme-copper respiratory oxidase family. Heme is required as a cofactor. It depends on Cu cation as a cofactor.

The protein resides in the cell membrane. It carries out the reaction 4 Fe(II)-[cytochrome c] + O2 + 8 H(+)(in) = 4 Fe(III)-[cytochrome c] + 2 H2O + 4 H(+)(out). The protein operates within energy metabolism; oxidative phosphorylation. This chain is Cytochrome c oxidase subunit 1 (cbaA), found in Thermus thermophilus.